The chain runs to 566 residues: Putative sensory transducer protein YvaQ (566 aa).

The first 31 residues, 1–31 (MRLTISRKFSLVFLTLILINLLVGGIGVLNM), serve as a signal peptide directing secretion. Residues 74-110 (DKSKMDTLDQEMNQIMEDINQKLDNYEKTISTDKEQK) are a coiled coil. Residues 186–206 (IYTALLVAASILISIFIWLYI) traverse the membrane as a helical segment. The 54-residue stretch at 208–261 (RNIVKPIIRMKESANHIAEGDLSNDMEALNSKDELGDLNEALQKMVGNLRDIVG) folds into the HAMP domain. The Methyl-accepting transducer domain maps to 280-530 (ATNETRSGSK…ESAAGIEETF (251 aa)). Residues 536–566 (SAHSMDQVLLNAEELEQLANELNEKMGQFTI) adopt a coiled-coil conformation.

The protein belongs to the methyl-accepting chemotaxis (MCP) protein family.

The protein resides in the cell membrane. Its function is as follows. Chemotactic-signal transducers respond to changes in the concentration of attractants and repellents in the environment, transduce a signal from the outside to the inside of the cell, and facilitate sensory adaptation through the variation of the level of methylation. Attractants increase the level of methylation while repellents decrease the level of methylation. This is Putative sensory transducer protein YvaQ (yvaQ) from Bacillus subtilis (strain 168).